Reading from the N-terminus, the 398-residue chain is Unsaturated chondroitin disaccharide hydrolase (398 aa).

The active-site Nucleophile is D115. Residues D115, D175, G233, T235, R247, W251, S365, and S368 each contribute to the substrate site. The active-site Proton donor is D175.

Belongs to the glycosyl hydrolase 88 family. In terms of assembly, monomer.

The enzyme catalyses beta-D-4-deoxy-Delta(4)-GlcpA-(1-&gt;3)-beta-D-GalpNAc6S + H2O = N-acetyl-beta-D-galactosamine 6-sulfate + 5-dehydro-4-deoxy-D-glucuronate. Functionally, catalyzes the hydrolysis of unsaturated hyaluronate and chondroitin disaccharides. Also degrades unsaturated heparin disaccharides. Releases 4-deoxy-4,5-didehydro D-glucuronic acid or 4-deoxy-4,5-didehydro L-iduronic acid from chondroitin disaccharides, hyaluronan disaccharides and heparin disaccharides and cleaves both glycosidic (1-&gt;3) and (1-&gt;4) bonds. Prefers sulfated glycosaminoglycans compared to unsulfated glycosaminoglycans. Probably required for mammalian cells invasion through the degradation of extracellular sulfated glycosaminoglycans such as chondroitin and hyaluronan. This Streptococcus agalactiae serotype III (strain NEM316) protein is Unsaturated chondroitin disaccharide hydrolase.